The sequence spans 220 residues: Protein-L-isoaspartate O-methyltransferase (220 aa).

The active site involves Ser65.

It belongs to the methyltransferase superfamily. L-isoaspartyl/D-aspartyl protein methyltransferase family.

Its subcellular location is the cytoplasm. The catalysed reaction is [protein]-L-isoaspartate + S-adenosyl-L-methionine = [protein]-L-isoaspartate alpha-methyl ester + S-adenosyl-L-homocysteine. Functionally, catalyzes the methyl esterification of L-isoaspartyl residues in peptides and proteins that result from spontaneous decomposition of normal L-aspartyl and L-asparaginyl residues. It plays a role in the repair and/or degradation of damaged proteins. This is Protein-L-isoaspartate O-methyltransferase from Pelodictyon phaeoclathratiforme (strain DSM 5477 / BU-1).